The sequence spans 562 residues: NAD-dependent malic enzyme (562 aa).

Tyr-101 functions as the Proton donor in the catalytic mechanism. Arg-154 lines the NAD(+) pocket. The Proton acceptor role is filled by Lys-172. Glu-243, Asp-244, and Asp-267 together coordinate a divalent metal cation. NAD(+) is bound by residues Asp-267 and Asn-415.

The protein belongs to the malic enzymes family. Homotetramer. Requires Mg(2+) as cofactor. The cofactor is Mn(2+).

The enzyme catalyses (S)-malate + NAD(+) = pyruvate + CO2 + NADH. It carries out the reaction oxaloacetate + H(+) = pyruvate + CO2. The protein is NAD-dependent malic enzyme of Aliivibrio salmonicida (strain LFI1238) (Vibrio salmonicida (strain LFI1238)).